The sequence spans 226 residues: UPF0758 protein SPT_1135 (226 aa).

Positions 103-225 (SILSSQKLAK…YFSYREKTDL (123 aa)) constitute an MPN domain. Residues His-174, His-176, and Asp-187 each contribute to the Zn(2+) site. The short motif at 174 to 187 (HNHPSGAVAPSQND) is the JAMM motif element.

Belongs to the UPF0758 family.

The sequence is that of UPF0758 protein SPT_1135 from Streptococcus pneumoniae (strain Taiwan19F-14).